A 216-amino-acid chain; its full sequence is Putative ripening-related protein 4 (216 aa).

The first 25 residues, 1–25, serve as a signal peptide directing secretion; that stretch reads MAANVKVLVVLALLQLMSLHAVVHG.

Belongs to the kiwellin family.

The protein resides in the secreted. The protein is Putative ripening-related protein 4 of Oryza sativa subsp. japonica (Rice).